Here is a 234-residue protein sequence, read N- to C-terminus: MDIKLKDFEGPLDLLLHLVSQYKVDIYEVPIVEVIEQYLNYIETLQVMKLEVAGDYMLMASQLMLIKSRRLLPKVVEHIEEEDLEQDLLEKIEEYSRFKAVSQALAKQHDQRAKWYSKPKQELIFEDAILQEDKTVMDLFLAFSNIMAAKRAVLKNNHTVIERDDYKIEDMMASIKQRLEKENVISLSAIFEECQTLNEVISIFLASLELIKLHVVFVEQLSNFGDIILRKEKR.

The protein belongs to the ScpA family. In terms of assembly, component of a cohesin-like complex composed of ScpA, ScpB and the Smc homodimer, in which ScpA and ScpB bind to the head domain of Smc. The presence of the three proteins is required for the association of the complex with DNA.

The protein localises to the cytoplasm. Participates in chromosomal partition during cell division. May act via the formation of a condensin-like complex containing Smc and ScpB that pull DNA away from mid-cell into both cell halves. The chain is Segregation and condensation protein A from Streptococcus pyogenes serotype M5 (strain Manfredo).